We begin with the raw amino-acid sequence, 289 residues long: BTB/POZ domain-containing protein KCTD7 (289 aa).

A disordered region spans residues 1 to 40 (MVVVTGREPDSRRPDGAMSSSDAEDDFLEPATPTATQAGH). The region spanning 53–141 (VPLNIGGAHF…YAIGPLLEQL (89 aa)) is the BTB domain.

As to quaternary structure, interacts with CUL3.

It is found in the cell membrane. The protein resides in the cytoplasm. It localises to the cytosol. Its function is as follows. May be involved in the control of excitability of cortical neurons. The protein is BTB/POZ domain-containing protein KCTD7 (KCTD7) of Bos taurus (Bovine).